The primary structure comprises 613 residues: Kelch-like protein 36 (613 aa).

Residues 45–112 (CDVVLVVEEQ…LYSSELELDG (68 aa)) form the BTB domain. The 103-residue stretch at 147 to 249 (YLYLQELASI…PEDILLQRVK (103 aa)) folds into the BACK domain. Kelch repeat units lie at residues 294 to 343 (CLLF…VLGG), 344 to 395 (FIFV…SIED), 396 to 442 (MLVA…IYKD), 444 to 491 (VYIS…SLGD), 492 to 544 (SIYS…VWQG), and 545 to 593 (RIYI…VCAL).

Interacts with CUL3.

It functions in the pathway protein modification; protein ubiquitination. Probable substrate-specific adapter of an E3 ubiquitin-protein ligase complex which mediates the ubiquitination and subsequent proteasomal degradation of target proteins. The chain is Kelch-like protein 36 (Klhl36) from Rattus norvegicus (Rat).